The primary structure comprises 762 residues: 5-methyltetrahydropteroyltriglutamate--homocysteine methyltransferase (762 aa).

Residues 17–20 and lysine 111 contribute to the 5-methyltetrahydropteroyltri-L-glutamate site; that span reads REWK. Residues 435–437 and glutamate 488 each bind L-homocysteine; that span reads IGS. Residues 435–437 and glutamate 488 contribute to the L-methionine site; that span reads IGS. 5-methyltetrahydropteroyltri-L-glutamate-binding positions include 519-520 and tryptophan 565; that span reads RC. Aspartate 603 is an L-homocysteine binding site. Residue aspartate 603 coordinates L-methionine. Residue glutamate 609 coordinates 5-methyltetrahydropteroyltri-L-glutamate. 3 residues coordinate Zn(2+): histidine 645, cysteine 647, and glutamate 669. The active-site Proton donor is histidine 698. Cysteine 730 is a binding site for Zn(2+).

Belongs to the vitamin-B12 independent methionine synthase family. It depends on Zn(2+) as a cofactor.

It carries out the reaction 5-methyltetrahydropteroyltri-L-glutamate + L-homocysteine = tetrahydropteroyltri-L-glutamate + L-methionine. The protein operates within amino-acid biosynthesis; L-methionine biosynthesis via de novo pathway; L-methionine from L-homocysteine (MetE route): step 1/1. Functionally, catalyzes the transfer of a methyl group from 5-methyltetrahydrofolate to homocysteine resulting in methionine formation. In Bacillus anthracis (strain A0248), this protein is 5-methyltetrahydropteroyltriglutamate--homocysteine methyltransferase.